A 198-amino-acid polypeptide reads, in one-letter code: HTH-type transcriptional regulator BetI (198 aa).

An HTH tetR-type domain is found at Pro8–Leu68. Positions Thr31–Phe50 form a DNA-binding region, H-T-H motif.

Its pathway is amine and polyamine biosynthesis; betaine biosynthesis via choline pathway [regulation]. Its function is as follows. Repressor involved in the biosynthesis of the osmoprotectant glycine betaine. It represses transcription of the choline transporter BetT and the genes of BetAB involved in the synthesis of glycine betaine. The polypeptide is HTH-type transcriptional regulator BetI (Brucella abortus (strain 2308)).